A 314-amino-acid polypeptide reads, in one-letter code: ATP synthase gamma chain (314 aa).

It belongs to the ATPase gamma chain family. F-type ATPases have 2 components, CF(1) - the catalytic core - and CF(0) - the membrane proton channel. CF(1) has five subunits: alpha(3), beta(3), gamma(1), delta(1), epsilon(1). CF(0) has three main subunits: a, b and c.

It is found in the cellular thylakoid membrane. Its function is as follows. Produces ATP from ADP in the presence of a proton gradient across the membrane. The gamma chain is believed to be important in regulating ATPase activity and the flow of protons through the CF(0) complex. The sequence is that of ATP synthase gamma chain from Crocosphaera subtropica (strain ATCC 51142 / BH68) (Cyanothece sp. (strain ATCC 51142)).